Reading from the N-terminus, the 101-residue chain is Phosphoribosyl-AMP cyclohydrolase (101 aa).

Mg(2+) is bound at residue Asp71. Cys72 serves as a coordination point for Zn(2+). Mg(2+) is bound by residues Asp73 and Asp75. Positions 88 and 95 each coordinate Zn(2+).

The protein belongs to the PRA-CH family. In terms of assembly, homodimer. The cofactor is Mg(2+). Zn(2+) is required as a cofactor.

It localises to the cytoplasm. It catalyses the reaction 1-(5-phospho-beta-D-ribosyl)-5'-AMP + H2O = 1-(5-phospho-beta-D-ribosyl)-5-[(5-phospho-beta-D-ribosylamino)methylideneamino]imidazole-4-carboxamide. The protein operates within amino-acid biosynthesis; L-histidine biosynthesis; L-histidine from 5-phospho-alpha-D-ribose 1-diphosphate: step 3/9. In terms of biological role, catalyzes the hydrolysis of the adenine ring of phosphoribosyl-AMP. In Bacillus cereus (strain B4264), this protein is Phosphoribosyl-AMP cyclohydrolase.